We begin with the raw amino-acid sequence, 304 residues long: Lipoprotein signal peptidase (304 aa).

A run of 3 helical transmembrane segments spans residues 28-48, 86-106, and 112-132; these read IKIK…IVFV, PAVP…TFIF, and LIVL…DRSV. Residues Asp148 and Asp163 contribute to the active site. A helical transmembrane segment spans residues 163–183; the sequence is DICIVTGFALIFLTFVVDIFL.

This sequence belongs to the peptidase A8 family.

It localises to the cell membrane. The catalysed reaction is Release of signal peptides from bacterial membrane prolipoproteins. Hydrolyzes -Xaa-Yaa-Zaa-|-(S,diacylglyceryl)Cys-, in which Xaa is hydrophobic (preferably Leu), and Yaa (Ala or Ser) and Zaa (Gly or Ala) have small, neutral side chains.. It functions in the pathway protein modification; lipoprotein biosynthesis (signal peptide cleavage). This protein specifically catalyzes the removal of signal peptides from prolipoproteins. The sequence is that of Lipoprotein signal peptidase from Mycoplasmoides gallisepticum (strain R(low / passage 15 / clone 2)) (Mycoplasma gallisepticum).